Here is a 242-residue protein sequence, read N- to C-terminus: Transcription factor TCP17 (242 aa).

In terms of domain architecture, TCP spans 33–91 (GKDRHSKVCTVRGLRDRRIRLSVMTAIQVYDLQERLGLSQPSKVIDWLLEVAKNDVDLL).

Interacts with SPL. Expressed in cotyledons, particularly in the vascular region, in leaves, roots, stems, buds, flowers and siliques.

Its subcellular location is the nucleus. Functionally, plays a pivotal role in the control of morphogenesis of shoot organs by negatively regulating the expression of boundary-specific genes such as CUC genes, probably through the induction of miRNA (e.g. miR164). Participates in ovule development. The protein is Transcription factor TCP17 (TCP17) of Arabidopsis thaliana (Mouse-ear cress).